Here is a 771-residue protein sequence, read N- to C-terminus: MTTVVDAEVQLTVVSDAAGRMRVQATGFQFDAGRAVAIEDTVGKVAGVQAVHAYPRTASIVIWYSRAICDTAAILSAIIDAETVPAAAVPAYASRSASNRKAGVVQKIIDWSTRTLSGVRRDVAAQPSGETSDACCDGEDNEDREPEQLWQVAKLRRAAFSGVLLTASLVAAWAYPLWPVVLGLKALALAVGASTFVPSSLKRLAEGRVGVGTLMTIAALGAVALGELGEAATLAFLFSISEGLEEYATARTRRGLRALLSLVPDQATVLREGTETIVASTELHVGDQMIVKPGERLATDGIIRAGRTALDVSAITGESVPVEVGPGDEVFAGSINGLGVLQVGVTATAANNSLARIVHIVEAEQVRKGASQRLADCIARPLVPSIMIAAALIAGTGSVLGNPLVWIERALVVLVAAAPCALAIAVPVTVVASIGAASRLGVLIKGGAALETLGTIRAVALDKTGTLTANRPVVIDVATTNGATREEVLAVAAALEARSEHPLAVAVLAATQATTAASDVQAVPGAGLIGRLDGRVVRLGRPGWLDAAELADHVACMQQAGATAVLVERDQQLLGAIAVRDELRPEAAEVVAGLRTGGYQVTMLTGDNHATAAALAAQAGIEQVHAELRPEDKAHLVAQLRARQPTAMVGDGVNDAPALAAADLGIAMGAMGTDVAIETADVALMGQDLRHLPQALDHARRSRQIMVQNVGLSLSIITVLMPLALFGILGLAAVVLVHEFTEVIVIANGVRAGRIKPLAGPPKTPDRTIPG.

Residues 19 to 86 (GRMRVQATGF…AIIDAETVPA (68 aa)) enclose the HMA domain. A helical transmembrane segment spans residues 72–92 (AAILSAIIDAETVPAAAVPAY). Residues 122–143 (DVAAQPSGETSDACCDGEDNED) are disordered. A run of 5 helical transmembrane segments spans residues 163–183 (VLLTASLVAAWAYPLWPVVLG), 209–229 (VGVGTLMTIAALGAVALGELG), 330–350 (VFAGSINGLGVLQVGVTATAA), 387–407 (MIAAALIAGTGSVLGNPLVWI), and 411–431 (LVVLVAAAPCALAIAVPVTVV). D462 acts as the 4-aspartylphosphate intermediate in catalysis. Residues D651 and D655 each coordinate Mg(2+). 2 helical membrane passes run 657 to 677 (PALAAADLGIAMGAMGTDVAI) and 716 to 736 (IITVLMPLALFGILGLAAVVL).

This sequence belongs to the cation transport ATPase (P-type) (TC 3.A.3) family. Type IB subfamily.

The protein resides in the cell membrane. The catalysed reaction is ATP + H2O = ADP + phosphate + H(+). This is Probable cation-transporting ATPase G (ctpG) from Mycobacterium bovis (strain ATCC BAA-935 / AF2122/97).